The chain runs to 408 residues: Lysosome-associated membrane glycoprotein 3 (408 aa).

The signal sequence occupies residues 1–20 (MPGQTSAVAVLLCLAVILHG). The Lumenal portion of the chain corresponds to 21–373 (YQIREKEFPE…IVDECLSDYT (353 aa)). 2 N-linked (GlcNAc...) asparagine glycosylation sites follow: N55 and N225. A disulfide bond links C230 and C267. The N-linked (GlcNAc...) asparagine glycan is linked to N284. The cysteines at positions 331 and 368 are disulfide-linked. A helical membrane pass occupies residues 374 to 394 (VVLPVVGIIVVVLCVVGLGIY). Residues 395-408 (KIRQRRQSSAYQRI) are Cytoplasmic-facing.

This sequence belongs to the LAMP family. Monomer. Interacts with FURIN.

The protein localises to the cell surface. The protein resides in the lysosome membrane. It localises to the cytoplasmic vesicle membrane. It is found in the early endosome membrane. Its function is as follows. Lysosomal membrane glycoprotein which plays a role in the unfolded protein response (UPR) that contributes to protein degradation and cell survival during proteasomal dysfunction. Plays a role in the process of fusion of the lysosome with the autophagosome, thereby modulating the autophagic process. Promotes hepatocellular lipogenesis through activation of the PI3K/Akt pathway. May also play a role in dendritic cell function and in adaptive immunity. The chain is Lysosome-associated membrane glycoprotein 3 (Lamp3) from Rattus norvegicus (Rat).